We begin with the raw amino-acid sequence, 140 residues long: Myrosinase 2 (140 aa).

The active-site Nucleophile is the Arg70. 2 N-linked (GlcNAc...) asparagine glycosylation sites follow: Asn114 and Asn127.

The protein belongs to the glycosyl hydrolase 1 family. Homodimer.

The catalysed reaction is a thioglucoside + H2O = a sugar + a thiol.. With respect to regulation, inhibited by ascorbate. In terms of biological role, degradation of glucosinolates (glucose residue linked by a thioglucoside bound to an amino acid derivative) to glucose, sulfate and any of the products: thiocyanates, isothiocyanates, nitriles, epithionitriles or oxazolidine-2-thiones. The chain is Myrosinase 2 from Brevicoryne brassicae (Mealy cabbage aphid).